An 853-amino-acid polypeptide reads, in one-letter code: MSAIENFDAHTPMMQQYLKLKAQHPEILLFYRMGDFYELFYDDAKRASQLLDISLTKRGASAGEPIPMAGIPYHAVENYLAKLVNQGESVAICEQIGDPATSKGPVERKVVRIVTPGTISDEALLQERQDNLLAAIWQDSKGFGYATLDISSGRFRLSEPADRETMAAELQRTNPAELLYAEDFAEMSLIEGRRGLRRRPLWEFEIDTARQQLNLQFGTRDLVGFGVENAPRGLCAAGCLLQYAKDTQRTTLPHIRSITMEREQDSIIMDAATRRNLEITQNLAGGAENTLASVLDCTVTPMGSRMLKRWLHMPVRDTRVLLERQQTIGALQDFTAELQPVLRQVGDLERILARLALRTARPRDLARMRHAFQQLPELRAQLETVDSAPVQALREKMGEFAELRDLLERAIIDTPPVLVRDGGVIASGYNEELDEWRALADGATDYLERLEVRERERTGLDTLKVGFNAVHGYYIQISRGQSHLAPINYMRRQTLKNAERYIIPELKEYEDKVLTSKGKALALEKQLYEELFDLLLPHLEALQQSASALAELDVLVNLAERAYTLNYTCPTFIDKPGIRITEGRHPVVEQVLNEPFIANPLNLSPQRRMLIITGPNMGGKSTYMRQTALIALMAYIGSYVPAQKVEIGPIDRIFTRVGAADDLASGRSTFMVEMTETANILHNATEYSLVLMDEIGRGTSTYDGLSLAWACAENLANKIKALTLFATHYFELTQLPEKMEGVANVHLDALEHGDTIAFMHSVQDGAASKSYGLAVAALAGVPKEVIKRARQKLRELESISPNAAATQVDGTQMSLLSVPEETSPAVEALENLDPDSLTPRQALEWIYRLKSLV.

ATP is bound at residue 614–621 (GPNMGGKS).

This sequence belongs to the DNA mismatch repair MutS family.

Functionally, this protein is involved in the repair of mismatches in DNA. It is possible that it carries out the mismatch recognition step. This protein has a weak ATPase activity. In Escherichia coli O157:H7 (strain EC4115 / EHEC), this protein is DNA mismatch repair protein MutS.